The primary structure comprises 75 residues: Large ribosomal subunit protein bL31 (75 aa).

The Zn(2+) site is built by Cys16, Cys18, Cys38, and Cys41.

The protein belongs to the bacterial ribosomal protein bL31 family. Type A subfamily. Part of the 50S ribosomal subunit. Zn(2+) serves as cofactor.

Its function is as follows. Binds the 23S rRNA. The chain is Large ribosomal subunit protein bL31 from Mycolicibacterium smegmatis (strain ATCC 700084 / mc(2)155) (Mycobacterium smegmatis).